The sequence spans 375 residues: Mitogen-activated protein kinase 4a (375 aa).

Residues 39 to 325 (KPPLRPIGRG…VEAALAHPYL (287 aa)) enclose the Protein kinase domain. ATP is bound by residues 45 to 53 (IGRGAYGIV) and K68. Catalysis depends on D165, which acts as the Proton acceptor. Residue T197 is modified to Phosphothreonine. The TXY motif lies at 197–199 (TEY). Y199 carries the phosphotyrosine modification.

This sequence belongs to the protein kinase superfamily. CMGC Ser/Thr protein kinase family. MAP kinase subfamily. Requires Mg(2+) as cofactor. Dually phosphorylated on Thr-197 and Tyr-199, which activates the enzyme. Phosphorylated in response to pathogen-associated molecular pattern (PAMP) chitin and in response to necrotrophic fungus B.cinerea spores. Not phosphorylated in response to osmotic stress. In terms of tissue distribution, expressed strongly in the apical cells of caulonemal air filaments and rhizoids in fully developed plants and less strongly, but readily detectable in filamentous protonemal tissue at the edge of the plant consisting of both chloronema and caulonema. When filamentous growth of protonema is promoted, the expression is strongest in newly formed apical tip cells of protonemal tissue.

It is found in the cytoplasm. The protein resides in the nucleus. It carries out the reaction L-seryl-[protein] + ATP = O-phospho-L-seryl-[protein] + ADP + H(+). The catalysed reaction is L-threonyl-[protein] + ATP = O-phospho-L-threonyl-[protein] + ADP + H(+). Activated by threonine and tyrosine phosphorylation. Activated in response to bacterial and fungal pathogen-associated molecular patterns (PAMPs) including chitin, chitosan and peptidyl glycans (PGNs). Activation in response to chitin requires the CERK1, MEKK1a/b, MKK1a/b/c and MPK4a/b signaling pathway. Activated in response to necrotrophic fungus B.cinerea spores. Not activated in response to osmotic stress. Functionally, the CERK1, MEKK1a/b, MKK1a/b/c and MPK4a/b proteins are involved in pathogen defense. The pathway induces rapid growth inhibition, cell wall depositions and accumulation of defense-related transcripts. This protein is required for innate immunity triggered by pathogen-associated molecular patterns (PAMPs). Involved in resistance to necrotrophic fungi B.cinerea and A.brassicicola. Involved in the transduction of signals from chitosan perception to the activation of defense genes. The polypeptide is Mitogen-activated protein kinase 4a (MPK4a) (Physcomitrium patens (Spreading-leaved earth moss)).